The primary structure comprises 92 residues: Major allergen I polypeptide chain 1 (92 aa).

A signal peptide spans 1–22 (MKGACVLVLLWAALLLISGGNC).

It belongs to the secretoglobin family. Heterotetramer composed of two non-covalently linked disulfide-linked heterodimer of chains 1 and 2. In terms of tissue distribution, saliva and sebaceous glands.

Its subcellular location is the secreted. The protein is Major allergen I polypeptide chain 1 (CH1) of Felis catus (Cat).